The primary structure comprises 474 residues: Glutamate--tRNA ligase (474 aa).

Residues 11 to 21 (PSPTGFLHIGG) carry the 'HIGH' region motif. The short motif at 240–244 (KLSKR) is the 'KMSKS' region element. Lys243 is an ATP binding site.

The protein belongs to the class-I aminoacyl-tRNA synthetase family. Glutamate--tRNA ligase type 1 subfamily. In terms of assembly, monomer.

The protein localises to the cytoplasm. It catalyses the reaction tRNA(Glu) + L-glutamate + ATP = L-glutamyl-tRNA(Glu) + AMP + diphosphate. In terms of biological role, catalyzes the attachment of glutamate to tRNA(Glu) in a two-step reaction: glutamate is first activated by ATP to form Glu-AMP and then transferred to the acceptor end of tRNA(Glu). This Nitrobacter hamburgensis (strain DSM 10229 / NCIMB 13809 / X14) protein is Glutamate--tRNA ligase.